The following is a 306-amino-acid chain: Porphobilinogen deaminase (306 aa).

Residue Cys-239 is modified to S-(dipyrrolylmethanemethyl)cysteine.

The protein belongs to the HMBS family. As to quaternary structure, monomer. Requires dipyrromethane as cofactor.

The catalysed reaction is 4 porphobilinogen + H2O = hydroxymethylbilane + 4 NH4(+). It functions in the pathway porphyrin-containing compound metabolism; protoporphyrin-IX biosynthesis; coproporphyrinogen-III from 5-aminolevulinate: step 2/4. Its function is as follows. Tetrapolymerization of the monopyrrole PBG into the hydroxymethylbilane pre-uroporphyrinogen in several discrete steps. In Helicobacter pylori (strain ATCC 700392 / 26695) (Campylobacter pylori), this protein is Porphobilinogen deaminase (hemC).